We begin with the raw amino-acid sequence, 294 residues long: 33 kDa chaperonin (294 aa).

2 cysteine pairs are disulfide-bonded: C236–C238 and C269–C272.

This sequence belongs to the HSP33 family. Under oxidizing conditions two disulfide bonds are formed involving the reactive cysteines. Under reducing conditions zinc is bound to the reactive cysteines and the protein is inactive.

The protein localises to the cytoplasm. Its function is as follows. Redox regulated molecular chaperone. Protects both thermally unfolding and oxidatively damaged proteins from irreversible aggregation. Plays an important role in the bacterial defense system toward oxidative stress. This Desulforamulus reducens (strain ATCC BAA-1160 / DSM 100696 / MI-1) (Desulfotomaculum reducens) protein is 33 kDa chaperonin.